A 374-amino-acid chain; its full sequence is Glutamate 5-kinase (374 aa).

Lys9 lines the ATP pocket. Positions 49, 136, and 148 each coordinate substrate. ATP contacts are provided by residues 168–169 and 210–216; these read TD and TGGMKSK. The PUA domain occupies 276–354; it reads SGVVRIDQGA…DEAKQLIPLV (79 aa).

This sequence belongs to the glutamate 5-kinase family.

The protein resides in the cytoplasm. The catalysed reaction is L-glutamate + ATP = L-glutamyl 5-phosphate + ADP. It functions in the pathway amino-acid biosynthesis; L-proline biosynthesis; L-glutamate 5-semialdehyde from L-glutamate: step 1/2. In terms of biological role, catalyzes the transfer of a phosphate group to glutamate to form L-glutamate 5-phosphate. This is Glutamate 5-kinase from Halalkalibacterium halodurans (strain ATCC BAA-125 / DSM 18197 / FERM 7344 / JCM 9153 / C-125) (Bacillus halodurans).